The chain runs to 295 residues: MSATIISGSLIASKFREELKQRVKILSETWMQPGLAVILAGDNPASCVYVRNKAKTCEELGIRSEIFNFPGDISQKALLQQIQDLNVNPEIHGILVQLPLPGHIRIDEVIAAIAIGKDVDGFHPCNVGALVTGHALFHPCTPFGVMKMLAEYDIPLQGQHAVIIGRSNIVGKPMALMLLEKGATVTVCTSRTRDLASHTRNADIVVMAAGKANLLTSDMIRTGATVIDVGINRLADGRLCGDVEFSGVKEKAGYITPVPGGVGPMTIVMLMNNTIEAAERAKAVALAGGWHSSVQ.

Residues 165–167 (GRS), S190, and I231 each bind NADP(+).

This sequence belongs to the tetrahydrofolate dehydrogenase/cyclohydrolase family. As to quaternary structure, homodimer.

It catalyses the reaction (6R)-5,10-methylene-5,6,7,8-tetrahydrofolate + NADP(+) = (6R)-5,10-methenyltetrahydrofolate + NADPH. The enzyme catalyses (6R)-5,10-methenyltetrahydrofolate + H2O = (6R)-10-formyltetrahydrofolate + H(+). Its pathway is one-carbon metabolism; tetrahydrofolate interconversion. Functionally, catalyzes the oxidation of 5,10-methylenetetrahydrofolate to 5,10-methenyltetrahydrofolate and then the hydrolysis of 5,10-methenyltetrahydrofolate to 10-formyltetrahydrofolate. This is Bifunctional protein FolD from Nitrosomonas europaea (strain ATCC 19718 / CIP 103999 / KCTC 2705 / NBRC 14298).